Here is a 162-residue protein sequence, read N- to C-terminus: Peroxiredoxin-2B (162 aa).

One can recognise a Thioredoxin domain in the interval 4 to 162 (IAVGDVVPDG…SSADDILKAL (159 aa)). Cysteine 51 serves as the catalytic Cysteine sulfenic acid (-SOH) intermediate.

This sequence belongs to the peroxiredoxin family. Prx5 subfamily. Monomer. As to expression, expressed in all tissues but mostly in reproductive tissues such as buds, flowers, siliques and seeds.

Its subcellular location is the cytoplasm. It catalyses the reaction [glutaredoxin]-dithiol + a hydroperoxide = [glutaredoxin]-disulfide + an alcohol + H2O. In terms of biological role, reduces hydrogen peroxide and alkyl hydroperoxides with reducing equivalents provided through the thioredoxin or glutaredoxin system. May be involved in intracellular redox signaling. Thiol-specific peroxidase that catalyzes the reduction of hydrogen peroxide and organic hydroperoxides to water and alcohols, respectively. Plays a role in cell protection against oxidative stress by detoxifying peroxides and as sensor of hydrogen peroxide-mediated signaling events. This chain is Peroxiredoxin-2B (PRXIIB), found in Arabidopsis thaliana (Mouse-ear cress).